A 1425-amino-acid polypeptide reads, in one-letter code: Neuropathy target esterase sws (1425 aa).

Residues 1-34 (MDVLEMLRASASGSYNTIFSDAWCQYVSKQITAT) lie on the Lumenal side of the membrane. The chain crosses the membrane as a helical span at residues 35–55 (VYMYFALVMMSLLFIAWFLYF). Residues 56-1425 (KRMARLRLRD…RSSPNNETKN (1370 aa)) are Cytoplasmic-facing. 174-301 (IFGHFEKPVF…IRVIQVIMIR (128 aa)) is an a nucleoside 3',5'-cyclic phosphate binding site. 2 stretches are compositionally biased toward polar residues: residues 332 to 348 (TMSGPINSQTSQSSRQA) and 357 to 366 (SQMNLMQSAV). A disordered region spans residues 332–410 (TMSGPINSQT…NPDGSFHGTT (79 aa)). The span at 367 to 381 (SGTGSSGVSVTVTRP) shows a compositional bias: low complexity. Phosphoserine occurs at positions 444 and 453. A nucleoside 3',5'-cyclic phosphate-binding positions include 482–609 (ELGL…VVRR) and 598–727 (IVLD…HRFL). Residues 952-1118 (LVLGGGGARG…VNNLPADVMH (167 aa)) enclose the PNPLA domain. The GXGXXG signature appears at 956 to 961 (GGGARG). The GXSXG signature appears at 983 to 987 (GVSIG). Serine 985 functions as the Nucleophile in the catalytic mechanism. Aspartate 1105 acts as the Proton acceptor in catalysis. Residues 1105-1107 (DGG) carry the DGA/G motif. Phosphoserine is present on serine 1160. The tract at residues 1330–1425 (LERKTDKSTQ…RSSPNNETKN (96 aa)) is disordered. The span at 1337 to 1347 (STQSSPPSNSR) shows a compositional bias: low complexity. Over residues 1348–1358 (SDMRGKEEARH) the composition is skewed to basic and acidic residues. Over residues 1380-1403 (TKTQTGQEQELQQEQQDQGATAEQ) the composition is skewed to low complexity. Residues 1404-1416 (LVDKDKEENKENR) are compositionally biased toward basic and acidic residues.

Belongs to the NTE family. As to quaternary structure, interacts with Pka-C3; interaction inhibits the catalytic function of Pka-C3 and the esterase activity of sws. Isoform A and isoform B are expressed in the entire brain cortex; cortical cell bodies of adult brain. Sws and Pka-C3 are colocalized in all neurons.

It localises to the endoplasmic reticulum membrane. The enzyme catalyses a 1-acyl-sn-glycero-3-phosphocholine + H2O = sn-glycerol 3-phosphocholine + a fatty acid + H(+). Functionally, phospholipase B that deacylates intracellular phosphatidylcholine (PtdCho), generating glycerophosphocholine (GroPtdCho). This deacylation occurs at both sn-2 and sn-1 positions of PtdCho. Its specific chemical modification by certain organophosphorus (OP) compounds leads to distal axonopathy. Plays a role in the signaling mechanism between neurons and glia that regulates glia wrapping during development of the adult brain. Essential for membrane lipid homeostasis and cell survival in both neurons and glia of the adult brain. This is Neuropathy target esterase sws (sws) from Drosophila melanogaster (Fruit fly).